We begin with the raw amino-acid sequence, 277 residues long: Coiled-coil domain-containing protein 117 (277 aa).

The disordered stretch occupies residues 22–69; that stretch reads SPPAFAGRAFPPGAAGHDLAPRPGVRGPPSSPDGRTARGRVSIHCRKK. The segment covering 23 to 55 has biased composition (low complexity); it reads PPAFAGRAFPPGAAGHDLAPRPGVRGPPSSPDG. An Omega-N-methylarginine modification is found at arginine 47. At serine 52 the chain carries Phosphoserine. Positions 58–69 are enriched in basic residues; it reads ARGRVSIHCRKK. A coiled-coil region spans residues 139–166; the sequence is QCEVARRRLQEIEDRIIDEDEEVESDRN. Disordered stretches follow at residues 216-242 and 255-277; these read LSEKPKPSSNPKNYMGESQTKHTATGT and QCTDTPLYHSLETAASTEEEMEL. Residues 225–242 show a composition bias toward polar residues; that stretch reads NPKNYMGESQTKHTATGT.

Interacts with CIAO2B; the interaction is direct. Interacts with MMS19; the interaction is indirect.

It localises to the cytoplasm. The protein localises to the cytoskeleton. Its subcellular location is the spindle. The protein resides in the nucleus. In terms of biological role, facilitates DNA repair, cell cycle progression, and cell proliferation through its interaction with CIAO2B. In Rattus norvegicus (Rat), this protein is Coiled-coil domain-containing protein 117.